Reading from the N-terminus, the 421-residue chain is 3-oxoacyl-[acyl-carrier-protein] synthase 2 (421 aa).

Positions 1 to 417 (MRRVVITGTG…GTNASLILRR (417 aa)) constitute a Ketosynthase family 3 (KS3) domain. Catalysis depends on for beta-ketoacyl synthase activity residues Cys-170, His-311, and His-347.

Belongs to the thiolase-like superfamily. Beta-ketoacyl-ACP synthases family. Homodimer.

It carries out the reaction a fatty acyl-[ACP] + malonyl-[ACP] + H(+) = a 3-oxoacyl-[ACP] + holo-[ACP] + CO2. It catalyses the reaction (9Z)-hexadecenoyl-[ACP] + malonyl-[ACP] + H(+) = 3-oxo-(11Z)-octadecenoyl-[ACP] + holo-[ACP] + CO2. Its pathway is lipid metabolism; fatty acid biosynthesis. In terms of biological role, involved in the type II fatty acid elongation cycle. Catalyzes the elongation of a wide range of acyl-ACP by the addition of two carbons from malonyl-ACP to an acyl acceptor. Can efficiently catalyze the conversion of palmitoleoyl-ACP (cis-hexadec-9-enoyl-ACP) to cis-vaccenoyl-ACP (cis-octadec-11-enoyl-ACP), an essential step in the thermal regulation of fatty acid composition. The sequence is that of 3-oxoacyl-[acyl-carrier-protein] synthase 2 (fabF) from Rhizobium meliloti (strain 1021) (Ensifer meliloti).